We begin with the raw amino-acid sequence, 78 residues long: Antitoxin VapB27 (78 aa).

In terms of domain architecture, SpoVT-AbrB spans 1–45; that stretch reads MKAVVDAAGRIVVPKPLREALGLQPGSTVEISRYGAGLHLIPTGR.

It belongs to the VapB family. As to quaternary structure, interacts with cognate toxin VapC27 and non-cognate toxins MazF6 and VapC40. Interaction with MazF6 and MazF9 partially neutralizes the toxins.

Antitoxin component of a type II toxin-antitoxin (TA) system. Cognate toxin is VapC27. Upon expression in E.coli partially counteracts the ribonuclease activity of non-cognate toxins MazF6 and MazF9. The sequence is that of Antitoxin VapB27 (vapB27) from Mycobacterium tuberculosis (strain ATCC 25618 / H37Rv).